Here is a 214-residue protein sequence, read N- to C-terminus: Small ribosomal subunit protein eS6 (214 aa).

It belongs to the eukaryotic ribosomal protein eS6 family.

The sequence is that of Small ribosomal subunit protein eS6 from Saccharolobus solfataricus (strain ATCC 35092 / DSM 1617 / JCM 11322 / P2) (Sulfolobus solfataricus).